Reading from the N-terminus, the 302-residue chain is Glutaminase (302 aa).

Substrate contacts are provided by Ser-61, Asn-111, Glu-155, Asn-162, Tyr-186, Tyr-238, and Val-256.

It belongs to the glutaminase family. In terms of assembly, homotetramer.

It carries out the reaction L-glutamine + H2O = L-glutamate + NH4(+). The polypeptide is Glutaminase (Pseudomonas syringae pv. tomato (strain ATCC BAA-871 / DC3000)).